We begin with the raw amino-acid sequence, 284 residues long: Putative xyloglucan endotransglucosylase/hydrolase protein 13 (284 aa).

Residues 1 to 24 form the signal peptide; that stretch reads MAAFTTKQSLLLLSLLLLISLSAG. Residues 25–214 enclose the GH16 domain; it reads SFYDNFDITW…WTNAPFSASY (190 aa). The active-site Nucleophile is glutamate 100. The Proton donor role is filled by glutamate 104. Glutamate 104 provides a ligand contact to xyloglucan. Asparagine 108 is a glycosylation site (N-linked (GlcNAc...) asparagine). Xyloglucan contacts are provided by residues 117–119, 127–129, 193–194, and glycine 198; these read HTN, NRE, and DW. 2 cysteine pairs are disulfide-bonded: cysteine 223–cysteine 234 and cysteine 267–cysteine 281. Arginine 272 contacts xyloglucan.

This sequence belongs to the glycosyl hydrolase 16 family. XTH group 2 subfamily. Contains at least one intrachain disulfide bond essential for its enzymatic activity.

It localises to the secreted. Its subcellular location is the cell wall. The protein localises to the extracellular space. The protein resides in the apoplast. It catalyses the reaction breaks a beta-(1-&gt;4) bond in the backbone of a xyloglucan and transfers the xyloglucanyl segment on to O-4 of the non-reducing terminal glucose residue of an acceptor, which can be a xyloglucan or an oligosaccharide of xyloglucan.. Functionally, may catalyze xyloglucan endohydrolysis (XEH) and/or endotransglycosylation (XET). Cleaves and religates xyloglucan polymers, an essential constituent of the primary cell wall, and thereby participates in cell wall construction of growing tissues. In Arabidopsis thaliana (Mouse-ear cress), this protein is Putative xyloglucan endotransglucosylase/hydrolase protein 13 (XTH13).